The chain runs to 649 residues: 2-hydroxyacyl-CoA lyase 2 (649 aa).

The helical transmembrane segment at 2-21 threads the bilayer; it reads FHLIPFVVAFLLVFLTWFLI. Glu-84 is a binding site for thiamine diphosphate. The interval 474–554 is thiamine pyrophosphate binding; the sequence is DFVGSAAYIL…AIGVIGNDAC (81 aa). Mg(2+) contacts are provided by Asp-525 and Asn-551.

This sequence belongs to the TPP enzyme family. Mg(2+) is required as a cofactor. Thiamine diphosphate serves as cofactor.

It localises to the endoplasmic reticulum membrane. The enzyme catalyses 2-hydroxyoctadecanoyl-CoA = heptadecanal + formyl-CoA. The catalysed reaction is (2R)-hydroxyhexadecanoyl-CoA = pentadecanal + formyl-CoA. Functionally, endoplasmic reticulum 2-OH acyl-CoA lyase involved in the cleavage (C1 removal) reaction in the fatty acid alpha-oxydation in a thiamine pyrophosphate (TPP)-dependent manner. Involved in the phytosphingosine degradation pathway. The polypeptide is 2-hydroxyacyl-CoA lyase 2 (ilvbl) (Xenopus laevis (African clawed frog)).